The primary structure comprises 100 residues: Small ribosomal subunit protein uS14c (100 aa).

Belongs to the universal ribosomal protein uS14 family. In terms of assembly, part of the 30S ribosomal subunit.

It localises to the plastid. Its function is as follows. Binds 16S rRNA, required for the assembly of 30S particles. The protein is Small ribosomal subunit protein uS14c (rps14) of Cuscuta gronovii (Common dodder).